The following is a 215-amino-acid chain: Redox-sensing transcriptional repressor Rex (215 aa).

Positions 18 to 57 (LYYRFLKNLHASGKQRVSSAELSDAVKVDSATIRRDFSYF) form a DNA-binding region, H-T-H motif. Residue 92 to 97 (GVGNLG) participates in NAD(+) binding.

This sequence belongs to the transcriptional regulatory Rex family. In terms of assembly, homodimer.

Its subcellular location is the cytoplasm. Modulates transcription in response to changes in cellular NADH/NAD(+) redox state. The sequence is that of Redox-sensing transcriptional repressor Rex from Bacillus subtilis (strain 168).